Here is a 232-residue protein sequence, read N- to C-terminus: MDNLVDIDEDGTQEKLSVNSTPYQTQECVLYGSIFAKNVPDLERRLAGLCDPGCEEFFEHEMSFSLRSSGIMDIKTDIKLRRRFRTEHRIQNYWQLKYIGVPEPDQKCPTIVRKEISSLVHSQDMMTYAKSLGLRMDYEYMTQGKLWTKGNIKILHSILTSTSRAGTYDSNSIKSVSDSALVEISISLPESAEYMPAAKSLRDFADQLMPLVNMEKVDYWKKMFPAQAAPRR.

Belongs to the Mediator complex subunit 18 family. Component of the Mediator complex.

It is found in the nucleus. Its function is as follows. Component of the Mediator complex, a coactivator involved in the regulated transcription of nearly all RNA polymerase II-dependent genes. Mediator functions as a bridge to convey information from gene-specific regulatory proteins to the basal RNA polymerase II transcription machinery. Mediator is recruited to promoters by direct interactions with regulatory proteins and serves as a scaffold for the assembly of a functional preinitiation complex with RNA polymerase II and the general transcription factors. In Caenorhabditis elegans, this protein is Mediator of RNA polymerase II transcription subunit 18 (mdt-18).